The primary structure comprises 78 residues: UPF0291 protein Ldb1355 (78 aa).

It belongs to the UPF0291 family.

It is found in the cytoplasm. This is UPF0291 protein Ldb1355 from Lactobacillus delbrueckii subsp. bulgaricus (strain ATCC 11842 / DSM 20081 / BCRC 10696 / JCM 1002 / NBRC 13953 / NCIMB 11778 / NCTC 12712 / WDCM 00102 / Lb 14).